The chain runs to 1306 residues: Clustered mitochondria protein homolog (1306 aa).

The span at 1–11 (MAVNNEVNNAA) shows a compositional bias: low complexity. Residues 1–47 (MAVNNEVNNAASETPTDVSSSSQKLATEETALTNGADHEEEDGGEAG) form a disordered region. The segment covering 12-33 (SETPTDVSSSSQKLATEETALT) has biased composition (polar residues). Positions 336 to 580 (DITRTQENYL…RVTPLDITWM (245 aa)) constitute a Clu domain. Disordered stretches follow at residues 630–689 (ERKR…QERI) and 912–956 (KQSQ…SPAA). Over residues 656-689 (EPAKSEEPTENGELAKKSESDEAAEPSKPDQERI) the composition is skewed to basic and acidic residues. TPR repeat units lie at residues 1032 to 1065 (ARVYNSLSMLYYQLDEKEAAMELARKAVIVSERT), 1074 to 1107 (LLNYLNLGLIAHASGETKLALTYIKHALDLWKVV), and 1116 to 1149 (ITTINNAAVMLQHLKEYHDSRTWFEASLKICEEV). The segment at 1275-1306 (FIEGSDQSNQNKKRPGRSNPKRRGGAAATAGK) is disordered. Over residues 1285-1298 (NKKRPGRSNPKRRG) the composition is skewed to basic residues.

The protein belongs to the CLU family. May associate with the eukaryotic translation initiation factor 3 (eIF-3) complex.

It is found in the cytoplasm. Functionally, mRNA-binding protein involved in proper cytoplasmic distribution of mitochondria. The polypeptide is Clustered mitochondria protein homolog (Botryotinia fuckeliana (strain B05.10) (Noble rot fungus)).